The primary structure comprises 435 residues: Cyclin-J-like protein (435 aa).

One can recognise a Cyclin N-terminal domain in the interval 14-191 (DVHCTLREKE…LLEAFSWNLC (178 aa)). The tract at residues 120-142 (SSNSPASAPHPPPTPPQVAETTG) is disordered.

This sequence belongs to the cyclin family. Cyclin J subfamily.

This is Cyclin-J-like protein (CCNJL) from Homo sapiens (Human).